A 538-amino-acid chain; its full sequence is DALR anticodon-binding domain-containing protein 3 (538 aa).

Part of a complex containing tRNA(Arg) and METTL2. Interacts with tRNA(Arg)(CCU) and tRNA(Arg)(UCU). Interacts with METTL2.

In terms of biological role, involved in tRNA methylation. Facilitates the recognition and targeting of tRNA(Arg)(CCU) and tRNA(Arg)(UCU) substrates for N(3)-methylcytidine modification by METTL2. The sequence is that of DALR anticodon-binding domain-containing protein 3 (Dalrd3) from Rattus norvegicus (Rat).